We begin with the raw amino-acid sequence, 137 residues long: uncharacterized protein (137 aa).

This is an uncharacterized protein from Mycobacterium leprae (strain TN).